A 324-amino-acid polypeptide reads, in one-letter code: Probable 6-phosphogluconolactonase 4, chloroplastic (324 aa).

The N-terminal 61 residues, 1 to 61 (MSVSAAVAAA…RAPAMATDCA (61 aa)), are a transit peptide targeting the chloroplast. The interval 20–43 (RRRSPPASRVAATSRGRPFSSGPH) is disordered. Positions 24–34 (PPASRVAATSR) are enriched in low complexity.

This sequence belongs to the glucosamine/galactosamine-6-phosphate isomerase family. 6-phosphogluconolactonase subfamily.

Its subcellular location is the plastid. The protein localises to the chloroplast. The catalysed reaction is 6-phospho-D-glucono-1,5-lactone + H2O = 6-phospho-D-gluconate + H(+). It participates in carbohydrate degradation; pentose phosphate pathway; D-ribulose 5-phosphate from D-glucose 6-phosphate (oxidative stage): step 2/3. Functionally, hydrolysis of 6-phosphogluconolactone to 6-phosphogluconate. The sequence is that of Probable 6-phosphogluconolactonase 4, chloroplastic from Oryza sativa subsp. indica (Rice).